Reading from the N-terminus, the 156-residue chain is Small ribosomal subunit protein uS7 (156 aa).

It belongs to the universal ribosomal protein uS7 family. Part of the 30S ribosomal subunit. Contacts proteins S9 and S11.

Functionally, one of the primary rRNA binding proteins, it binds directly to 16S rRNA where it nucleates assembly of the head domain of the 30S subunit. Is located at the subunit interface close to the decoding center, probably blocks exit of the E-site tRNA. The chain is Small ribosomal subunit protein uS7 from Clostridium novyi (strain NT).